We begin with the raw amino-acid sequence, 101 residues long: Protein RnfH (101 aa).

This sequence belongs to the UPF0125 (RnfH) family.

The chain is Protein RnfH from Pseudomonas aeruginosa (strain UCBPP-PA14).